Reading from the N-terminus, the 120-residue chain is Large ribosomal subunit protein uL18 (120 aa).

It belongs to the universal ribosomal protein uL18 family. Part of the 50S ribosomal subunit. Part of the 5S rRNA/L5/L18/L25 subcomplex. Contacts the 23S rRNA and 5S rRNA. Required for catalysis of RNase M5.

This is one of the proteins that bind and probably mediate the attachment of the 5S RNA into the large ribosomal subunit, where it forms part of the central protuberance. In terms of biological role, required for correct processing of both the 5' and 3' ends of 5S rRNA precursor, which is does in conjunction with ribonuclease M5 (RNase M5, rnmV). Possibly folds the 5S rRNA precursor into the correct conformation, thus acting as a chaperone. In Bacillus subtilis (strain 168), this protein is Large ribosomal subunit protein uL18.